Consider the following 62-residue polypeptide: uncharacterized protein (62 aa).

The tract at residues 1–26 (MGELAASANHGHSPCYPERKGTPGDL) is disordered. Over residues 17 to 26 (PERKGTPGDL) the composition is skewed to basic and acidic residues.

This is an uncharacterized protein from Homo sapiens (Human).